A 354-amino-acid chain; its full sequence is Gibberellin receptor GID1 (354 aa).

Residues 120–122 (HGG) carry the Involved in the stabilization of the negatively charged intermediate by the formation of the oxyanion hole motif. Residues 122-123 (GS), tyrosine 134, serine 198, and aspartate 250 contribute to the gibberellin A3 site. Residues 122 to 123 (GS), tyrosine 134, and serine 198 each bind gibberellin A4. Serine 198 is an active-site residue. Aspartate 296 is a catalytic residue. Glycine 327 provides a ligand contact to gibberellin A3. Residue glycine 327 coordinates gibberellin A4.

This sequence belongs to the 'GDXG' lipolytic enzyme family. Interacts with the DELLA protein SLR1 in a GA-dependent manner, resulting in subsequent SLR1 degradation.

The protein resides in the nucleus. Its function is as follows. Functions as a soluble gibberellin (GA) receptor. GA is an essential hormone that regulates growth and development in plants. Binds with high affinity the biologically active GAs such as GA1, GA3 and GA4, but has low or no affinity for the biologically inactive GAs. Upon GA-binding, it interacts with the DELLA protein SLR1, a repressor of GA signaling. This leads to SLR1 degradation by the proteasome, allowing the GA signaling pathway. This Oryza sativa subsp. japonica (Rice) protein is Gibberellin receptor GID1.